Here is a 458-residue protein sequence, read N- to C-terminus: UDP-N-acetylmuramate--L-alanine ligase (458 aa).

118 to 124 (GTHGKTT) is a binding site for ATP.

This sequence belongs to the MurCDEF family.

Its subcellular location is the cytoplasm. The enzyme catalyses UDP-N-acetyl-alpha-D-muramate + L-alanine + ATP = UDP-N-acetyl-alpha-D-muramoyl-L-alanine + ADP + phosphate + H(+). Its pathway is cell wall biogenesis; peptidoglycan biosynthesis. Cell wall formation. This Clostridium botulinum (strain Langeland / NCTC 10281 / Type F) protein is UDP-N-acetylmuramate--L-alanine ligase.